The following is a 124-amino-acid chain: WAP four-disulfide core domain protein 2 (124 aa).

The first 27 residues, 1 to 27 (MPACRPGPLAGALLLGLLLLGLPRVPG), serve as a signal peptide directing secretion. 2 WAP domains span residues 29–73 (EVEK…CHLP) and 74–123 (NEKE…VTPI). Cystine bridges form between Cys-36-Cys-62, Cys-45-Cys-66, Cys-49-Cys-61, Cys-55-Cys-70, Cys-80-Cys-110, Cys-93-Cys-114, Cys-97-Cys-109, and Cys-103-Cys-119. A glycan (N-linked (GlcNAc...) asparagine) is linked at Asn-44.

As to quaternary structure, homotrimer; disulfide-linked. As to expression, epididymis. Highest levels are found in the caput and proximal cauda regions. Lower levels in the distal cauda. Not detected in the efferent ducts.

It is found in the secreted. Functionally, broad range protease inhibitor. Possible function in sperm maturation. In Canis lupus familiaris (Dog), this protein is WAP four-disulfide core domain protein 2 (WFDC2).